The chain runs to 278 residues: Cation-dependent mannose-6-phosphate receptor (278 aa).

An N-terminal signal peptide occupies residues 1 to 21; sequence MFPFSGCWRTELLLLLLLAVA. Topologically, residues 22 to 186 are lumenal; it reads VRESWQIEEK…SLACSPEVSH (165 aa). An MRH domain is found at 31 to 182; the sequence is KSCDLVGEKD…EMDSSLACSP (152 aa). The cysteines at positions 33 and 79 are disulfide-linked. N-linked (GlcNAc...) asparagine glycans are attached at residues N58, N84, N95, N108, and N114. Intrachain disulfides connect C133/C168 and C146/C180. Residues 187-211 traverse the membrane as a helical segment; sequence LSVGSILLVIFASLVAVYIIGGFLY. Topologically, residues 212–278 are cytoplasmic; sequence QRLVVGAKGM…EERDDHLLPM (67 aa). Residues 257–278 are disordered; it reads RGVGDDQLGEESEERDDHLLPM. A Phosphoserine modification is found at S268.

Homodimer. Binds GGA1, GGA2 and GGA3.

The protein resides in the lysosome membrane. Transport of phosphorylated lysosomal enzymes from the Golgi complex and the cell surface to lysosomes. Lysosomal enzymes bearing phosphomannosyl residues bind specifically to mannose-6-phosphate receptors in the Golgi apparatus and the resulting receptor-ligand complex is transported to an acidic prelyosomal compartment where the low pH mediates the dissociation of the complex. The chain is Cation-dependent mannose-6-phosphate receptor (M6pr) from Mus musculus (Mouse).